Here is a 364-residue protein sequence, read N- to C-terminus: Aminomethyltransferase (364 aa).

It belongs to the GcvT family. The glycine cleavage system is composed of four proteins: P, T, L and H.

The enzyme catalyses N(6)-[(R)-S(8)-aminomethyldihydrolipoyl]-L-lysyl-[protein] + (6S)-5,6,7,8-tetrahydrofolate = N(6)-[(R)-dihydrolipoyl]-L-lysyl-[protein] + (6R)-5,10-methylene-5,6,7,8-tetrahydrofolate + NH4(+). Functionally, the glycine cleavage system catalyzes the degradation of glycine. This Salmonella enteritidis PT4 (strain P125109) protein is Aminomethyltransferase.